The sequence spans 544 residues: Thermosome subunit (544 aa).

This sequence belongs to the TCP-1 chaperonin family. Forms an oligomeric complex of eight-membered rings.

In terms of biological role, molecular chaperone; binds unfolded polypeptides in vitro, and has a weak ATPase activity. The sequence is that of Thermosome subunit (ths) from Methanothermococcus thermolithotrophicus (Methanococcus thermolithotrophicus).